The chain runs to 116 residues: Nitrogenase-stabilizing/protective protein NifW (116 aa).

Belongs to the NifW family. In terms of assembly, homotrimer; associates with NifD.

Its function is as follows. May protect the nitrogenase Fe-Mo protein from oxidative damage. In Rhodopseudomonas palustris (strain ATCC BAA-98 / CGA009), this protein is Nitrogenase-stabilizing/protective protein NifW.